Consider the following 160-residue polypeptide: Small ribosomal subunit protein uS7 (160 aa).

The protein belongs to the universal ribosomal protein uS7 family. In terms of assembly, part of the 30S ribosomal subunit. Contacts proteins S9 and S11.

Its function is as follows. One of the primary rRNA binding proteins, it binds directly to 16S rRNA where it nucleates assembly of the head domain of the 30S subunit. Is located at the subunit interface close to the decoding center, probably blocks exit of the E-site tRNA. This is Small ribosomal subunit protein uS7 from Rickettsia canadensis (strain McKiel).